The sequence spans 512 residues: Protein OS-9 homolog (512 aa).

The N-terminal stretch at 1–17 is a signal peptide; it reads MRRFNLILLASLQLVGA. The tract at residues 71–91 is disordered; it reads QAREADARDNEAENKDQDGPS. Residues 73–88 are compositionally biased toward basic and acidic residues; that stretch reads READARDNEAENKDQD. Asn-118 carries N-linked (GlcNAc...) asparagine glycosylation. In terms of domain architecture, MRH spans 149 to 288; the sequence is DSCLYFMSGW…VVNTPRLCND (140 aa). Cys-151 and Cys-164 form a disulfide bridge. The a mannooligosaccharide derivative site is built by Trp-158, Trp-159, Gln-171, Asp-242, Arg-248, Glu-270, and Tyr-276. Intrachain disulfides connect Cys-241–Cys-274 and Cys-256–Cys-286. Disordered regions lie at residues 329 to 349 and 485 to 512; these read QVPL…PRDV and AAAK…KDEL. Residues 492 to 504 are compositionally biased toward acidic residues; it reads DDEEEVVEGSEEQ. The Prevents secretion from ER signature appears at 509-512; it reads KDEL.

Belongs to the OS-9 family. As to quaternary structure, interacts with missfolded ER lumenal proteins.

It is found in the endoplasmic reticulum membrane. Its function is as follows. Lectin involved in the quality control of the secretory pathway. As a member of the endoplasmic reticulum-associated degradation lumenal (ERAD-L) surveillance system, targets misfolded endoplasmic reticulum lumenal glycoproteins for degradation. The chain is Protein OS-9 homolog (YOS1) from Gibberella zeae (strain ATCC MYA-4620 / CBS 123657 / FGSC 9075 / NRRL 31084 / PH-1) (Wheat head blight fungus).